We begin with the raw amino-acid sequence, 201 residues long: Small ribosomal subunit protein uS4c (201 aa).

Residues 14-43 form a disordered region; the sequence is RLGALPGLTSKRPRAGSDLRNQSRPGKKSQ. An S4 RNA-binding domain is found at 89-169; it reads MRLDNILFRL…LPKHLTFHTL (81 aa).

The protein belongs to the universal ribosomal protein uS4 family. Part of the 30S ribosomal subunit. Contacts protein S5. The interaction surface between S4 and S5 is involved in control of translational fidelity.

Its subcellular location is the plastid. The protein resides in the chloroplast. Functionally, one of the primary rRNA binding proteins, it binds directly to 16S rRNA where it nucleates assembly of the body of the 30S subunit. Its function is as follows. With S5 and S12 plays an important role in translational accuracy. The polypeptide is Small ribosomal subunit protein uS4c (rps4) (Gossypium hirsutum (Upland cotton)).